The primary structure comprises 1031 residues: Error-prone DNA polymerase (1031 aa).

It belongs to the DNA polymerase type-C family. DnaE2 subfamily.

Its subcellular location is the cytoplasm. The enzyme catalyses DNA(n) + a 2'-deoxyribonucleoside 5'-triphosphate = DNA(n+1) + diphosphate. DNA polymerase involved in damage-induced mutagenesis and translesion synthesis (TLS). It is not the major replicative DNA polymerase. This chain is Error-prone DNA polymerase, found in Pseudomonas aeruginosa (strain ATCC 15692 / DSM 22644 / CIP 104116 / JCM 14847 / LMG 12228 / 1C / PRS 101 / PAO1).